A 539-amino-acid chain; its full sequence is uncharacterized protein (539 aa).

S216 serves as the catalytic Acyl-ester intermediate.

It belongs to the type-B carboxylesterase/lipase family.

The protein resides in the cytoplasm. The protein localises to the nucleus. This is an uncharacterized protein from Schizosaccharomyces pombe (strain 972 / ATCC 24843) (Fission yeast).